The chain runs to 421 residues: 4-hydroxy-3-methylbut-2-en-1-yl diphosphate synthase (flavodoxin) (421 aa).

Residues C311, C314, C357, and E364 each coordinate [4Fe-4S] cluster.

The protein belongs to the IspG family. Requires [4Fe-4S] cluster as cofactor.

It carries out the reaction (2E)-4-hydroxy-3-methylbut-2-enyl diphosphate + oxidized [flavodoxin] + H2O + 2 H(+) = 2-C-methyl-D-erythritol 2,4-cyclic diphosphate + reduced [flavodoxin]. Its pathway is isoprenoid biosynthesis; isopentenyl diphosphate biosynthesis via DXP pathway; isopentenyl diphosphate from 1-deoxy-D-xylulose 5-phosphate: step 5/6. Converts 2C-methyl-D-erythritol 2,4-cyclodiphosphate (ME-2,4cPP) into 1-hydroxy-2-methyl-2-(E)-butenyl 4-diphosphate. The sequence is that of 4-hydroxy-3-methylbut-2-en-1-yl diphosphate synthase (flavodoxin) from Xanthomonas euvesicatoria pv. vesicatoria (strain 85-10) (Xanthomonas campestris pv. vesicatoria).